The following is a 400-amino-acid chain: Coiled-coil domain-containing glutamate-rich protein 1 (400 aa).

Positions 1–11 (MTQTVNEREDP) are enriched in basic and acidic residues. Disordered regions lie at residues 1-68 (MTQT…IPGP), 134-164 (RPPGRKKRWGRRGRGLRRHPRRSFPRNPPID), and 203-353 (QEKL…DKFL). Positions 31–45 (YHRRQRGAPMSKRRY) are enriched in basic residues. Residues 46 to 57 (RDGPKTEYEAPR) show a composition bias toward basic and acidic residues. The span at 137-157 (GRKKRWGRRGRGLRRHPRRSF) shows a compositional bias: basic residues. Positions 209 to 220 (QQAALRAHQAQA) are enriched in low complexity. Residues 255-271 (PSLTFSPAPGQQNQSPT) show a composition bias toward polar residues. The span at 275 to 347 (VEEEEKNVDD…EAGLEEGEQR (73 aa)) shows a compositional bias: acidic residues. A coiled-coil region spans residues 299–335 (EEEEVDGESEDEDVDEEEVEEAGNGEEREEDQEEEDV).

The protein resides in the nucleus. Its function is as follows. Regulator of histone epigenetic modifications and chromatin compaction into the sperm head, required for histone-to-protamine (HTP) transition. HTP is a key event in which somatic histones are first replaced by testis-specific histone variants, then transition proteins (TNPs) are incorporated into the spermatid nucleus, and finally protamines (PRMs) replace the TNPs to promote chromatin condensation. The polypeptide is Coiled-coil domain-containing glutamate-rich protein 1 (Ccer1) (Rattus norvegicus (Rat)).